The chain runs to 312 residues: Pectin lyase (312 aa).

Arg-201 is a catalytic residue. The interval 254-274 (GSGTFTDTNSVPPITNQKSPK) is disordered. Residues 256-274 (GTFTDTNSVPPITNQKSPK) are compositionally biased toward polar residues.

It belongs to the polysaccharide lyase 1 family.

It catalyses the reaction Eliminative cleavage of (1-&gt;4)-alpha-D-galacturonan methyl ester to give oligosaccharides with 4-deoxy-6-O-methyl-alpha-D-galact-4-enuronosyl groups at their non-reducing ends.. This is Pectin lyase (pnl) from Pseudomonas marginalis (Pseudomonas panacis).